A 323-amino-acid polypeptide reads, in one-letter code: Serine racemase (323 aa).

Residues Ser32, Ser33, and Lys52 each contribute to the ATP site. Lys57 (proton acceptor) is an active-site residue. Lys57 is subject to Lysino-D-alanine (Lys); alternate. At Lys57 the chain carries N6-(pyridoxal phosphate)lysine; alternate. Thr79 serves as a coordination point for Ca(2+). The active-site Proton acceptor is Ser82. Asn84 is a pyridoxal 5'-phosphate binding site. Residues Gln87 and Tyr119 each contribute to the ATP site. Asp176 is a binding site for Mg(2+). Residues Gly183, Gly184, Gly185, Gly186, and Leu187 each contribute to the pyridoxal 5'-phosphate site. Residues Glu208, Gly212, and Asp214 each contribute to the Ca(2+) site. 3 residues coordinate Mg(2+): Glu208, Gly212, and Asp214. 3 residues coordinate Mn(2+): Glu208, Gly212, and Asp214. Lys277 lines the ATP pocket. Ser308 is a pyridoxal 5'-phosphate binding site. Asn311 provides a ligand contact to ATP.

The protein belongs to the serine/threonine dehydratase family. Homodimer. It depends on Mg(2+) as a cofactor. The cofactor is Mn(2+). Requires Ca(2+) as cofactor. Pyridoxal 5'-phosphate serves as cofactor. Modification of the active site Lys by its substrate Ser to lysino-D-alanine reduces but does not abolish enzyme activity.

The enzyme catalyses L-serine = D-serine. The catalysed reaction is L-serine = pyruvate + NH4(+). It catalyses the reaction D-serine = pyruvate + NH4(+). Its activity is regulated as follows. Allosterically activated by ATP, by magnesium, and possibly also by other divalent metal cations. In terms of biological role, catalyzes the synthesis of D-serine from L-serine. Has dehydratase activity towards both L-serine and D-serine. This Schizosaccharomyces pombe (strain 972 / ATCC 24843) (Fission yeast) protein is Serine racemase.